The chain runs to 243 residues: 1-(5-phosphoribosyl)-5-[(5-phosphoribosylamino)methylideneamino] imidazole-4-carboxamide isomerase (243 aa).

Asp10 serves as the catalytic Proton acceptor. Asp131 (proton donor) is an active-site residue.

Belongs to the HisA/HisF family.

Its subcellular location is the cytoplasm. The catalysed reaction is 1-(5-phospho-beta-D-ribosyl)-5-[(5-phospho-beta-D-ribosylamino)methylideneamino]imidazole-4-carboxamide = 5-[(5-phospho-1-deoxy-D-ribulos-1-ylimino)methylamino]-1-(5-phospho-beta-D-ribosyl)imidazole-4-carboxamide. It functions in the pathway amino-acid biosynthesis; L-histidine biosynthesis; L-histidine from 5-phospho-alpha-D-ribose 1-diphosphate: step 4/9. The protein is 1-(5-phosphoribosyl)-5-[(5-phosphoribosylamino)methylideneamino] imidazole-4-carboxamide isomerase of Rhizorhabdus wittichii (strain DSM 6014 / CCUG 31198 / JCM 15750 / NBRC 105917 / EY 4224 / RW1) (Sphingomonas wittichii).